The primary structure comprises 248 residues: Probable transcriptional regulatory protein Bind_0345 (248 aa).

The protein belongs to the TACO1 family.

The protein localises to the cytoplasm. The chain is Probable transcriptional regulatory protein Bind_0345 from Beijerinckia indica subsp. indica (strain ATCC 9039 / DSM 1715 / NCIMB 8712).